Reading from the N-terminus, the 89-residue chain is Small ribosomal subunit protein uS15 (89 aa).

It belongs to the universal ribosomal protein uS15 family. In terms of assembly, part of the 30S ribosomal subunit. Forms a bridge to the 50S subunit in the 70S ribosome, contacting the 23S rRNA.

Its function is as follows. One of the primary rRNA binding proteins, it binds directly to 16S rRNA where it helps nucleate assembly of the platform of the 30S subunit by binding and bridging several RNA helices of the 16S rRNA. In terms of biological role, forms an intersubunit bridge (bridge B4) with the 23S rRNA of the 50S subunit in the ribosome. The chain is Small ribosomal subunit protein uS15 from Geobacillus kaustophilus (strain HTA426).